The sequence spans 159 residues: NADH-quinone oxidoreductase subunit B (159 aa).

Positions 37, 38, 102, and 132 each coordinate [4Fe-4S] cluster.

This sequence belongs to the complex I 20 kDa subunit family. NDH-1 is composed of 14 different subunits. Subunits NuoB, C, D, E, F, and G constitute the peripheral sector of the complex. [4Fe-4S] cluster serves as cofactor.

It is found in the cell inner membrane. The catalysed reaction is a quinone + NADH + 5 H(+)(in) = a quinol + NAD(+) + 4 H(+)(out). NDH-1 shuttles electrons from NADH, via FMN and iron-sulfur (Fe-S) centers, to quinones in the respiratory chain. Couples the redox reaction to proton translocation (for every two electrons transferred, four hydrogen ions are translocated across the cytoplasmic membrane), and thus conserves the redox energy in a proton gradient. This Paraburkholderia phymatum (strain DSM 17167 / CIP 108236 / LMG 21445 / STM815) (Burkholderia phymatum) protein is NADH-quinone oxidoreductase subunit B.